A 207-amino-acid chain; its full sequence is Large ribosomal subunit protein uL4 (207 aa).

A disordered region spans residues 47-77 (GTADTKTRAEVSGGGRKPWRQKGTGRARHGS). Residues 63–77 (KPWRQKGTGRARHGS) are compositionally biased toward basic residues.

It belongs to the universal ribosomal protein uL4 family. As to quaternary structure, part of the 50S ribosomal subunit.

One of the primary rRNA binding proteins, this protein initially binds near the 5'-end of the 23S rRNA. It is important during the early stages of 50S assembly. It makes multiple contacts with different domains of the 23S rRNA in the assembled 50S subunit and ribosome. In terms of biological role, forms part of the polypeptide exit tunnel. The chain is Large ribosomal subunit protein uL4 from Symbiobacterium thermophilum (strain DSM 24528 / JCM 14929 / IAM 14863 / T).